Reading from the N-terminus, the 422-residue chain is Kynurenine--oxoglutarate transaminase 1 (422 aa).

G36 and N185 together coordinate substrate. K247 carries the post-translational modification N6-(pyridoxal phosphate)lysine. Substrate is bound at residue R398.

This sequence belongs to the class-I pyridoxal-phosphate-dependent aminotransferase family. As to quaternary structure, homodimer. Pyridoxal 5'-phosphate serves as cofactor.

It is found in the cytoplasm. The protein localises to the cytosol. The catalysed reaction is L-kynurenine + 2-oxoglutarate = kynurenate + L-glutamate + H2O. The enzyme catalyses 3-phenylpyruvate + L-glutamine = 2-oxoglutaramate + L-phenylalanine. It catalyses the reaction an S-substituted L-cysteine + H2O = a thiol + pyruvate + NH4(+). It participates in amino-acid degradation; L-kynurenine degradation; kynurenate from L-kynurenine: step 1/2. With respect to regulation, inhibited by tryptophan, indole-3-pyruvic acid, 3-indolepropionic acid, DL-indole-3-lactic acid, indole-3-acetic acid (IAC), amino-oxyacetate (AOAA), aminooxy-phenylpropionic acid (AOPP) and Tris. Its function is as follows. Catalyzes the irreversible transamination of the L-tryptophan metabolite L-kynurenine to form kynurenic acid (KA), an intermediate in the tryptophan catabolic pathway which is also a broad spectrum antagonist of the three ionotropic excitatory amino acid receptors among others. Also metabolizes the cysteine conjugates of certain halogenated alkenes and alkanes to form reactive metabolites. Catalyzes the beta-elimination of S-conjugates and Se-conjugates of L-(seleno)cysteine, resulting in the cleavage of the C-S or C-Se bond. This chain is Kynurenine--oxoglutarate transaminase 1, found in Homo sapiens (Human).